Here is a 152-residue protein sequence, read N- to C-terminus: Smith-Magenis syndrome chromosomal region candidate gene 5 protein homolog (152 aa).

Positions 41 to 77 are disordered; sequence TPCAGPSSQAPPQPPQASPPAAPDHSRTPSLLASSHS. Over residues 49–62 the composition is skewed to pro residues; the sequence is QAPPQPPQASPPAA.

This Macaca fascicularis (Crab-eating macaque) protein is Smith-Magenis syndrome chromosomal region candidate gene 5 protein homolog (SMCR5).